The sequence spans 495 residues: Protein adenylyltransferase Fic (495 aa).

Positions 1-23 (MGTEAEPPSPPSPPAQQQEQANP) are disordered. The helical transmembrane segment at 36 to 58 (LYRLVLFFIAGSLTAWMFHAFSS) threads the bilayer. TPR repeat units follow at residues 121 to 154 (ALVS…APRH) and 155 to 189 (PEVL…SPSN). Positions 246–251 (SVGIEG) match the Inhibitory (S/T)XXXE(G/N) motif motif. Residues Glu-250 and 331–334 (VGGH) each bind ATP. One can recognise a Fido domain in the interval 300-435 (ITIKDILELH…IRPFVRFIAD (136 aa)). His-378 is a catalytic residue. ATP-binding positions include 382–389 (DGNGRTSR), 414–415 (YY), and Asn-422.

This sequence belongs to the fic family. In terms of assembly, homodimer.

Its subcellular location is the membrane. The catalysed reaction is L-tyrosyl-[protein] + ATP = O-(5'-adenylyl)-L-tyrosyl-[protein] + diphosphate. The enzyme catalyses L-threonyl-[protein] + ATP = 3-O-(5'-adenylyl)-L-threonyl-[protein] + diphosphate. It carries out the reaction 3-O-(5'-adenylyl)-L-threonyl-[protein] + H2O = L-threonyl-[protein] + AMP + H(+). The side chain of Glu-250 determines which of the two opposing activities (AMPylase or de-AMPylase) will take place. In response to endoplasmic reticulum stress, mediates de-AMPylase activity. Adenylyltransferase activity is inhibited by the inhibitory helix present at the N-terminus: Glu-250 binds ATP and competes with ATP-binding at Arg-389, thereby preventing adenylyltransferase activity. In unstressed cells, disengagement of Glu-250 promotes adenylyltransferase activity. Activation dissociates ATP-binding from Glu-250, allowing ordered binding of the entire ATP moiety with the alpha-phosphate in an orientation that is productive for accepting an incoming target hydroxyl side chain. Its function is as follows. Protein that can both mediate the addition of adenosine 5'-monophosphate (AMP) to specific residues of target proteins (AMPylation), and the removal of the same modification from target proteins (de-AMPylation), depending on the context. The side chain of Glu-250 determines which of the two opposing activities (AMPylase or de-AMPylase) will take place. Acts as a key regulator of the unfolded protein response (UPR) by mediating AMPylation or de-AMPylation of Hsc70-3/BiP. In unstressed cells, acts as an adenylyltransferase by mediating AMPylation of Hsc70-3/BiP at 'Thr-518', thereby inactivating it. In response to endoplasmic reticulum stress, acts as a phosphodiesterase by mediating removal of ATP (de-AMPylation) from Hsc70-3/BiP at 'Thr-518', leading to restore HSPA5/BiP activity. This Drosophila erecta (Fruit fly) protein is Protein adenylyltransferase Fic.